The sequence spans 162 residues: Large ribosomal subunit protein uL10 (162 aa).

This sequence belongs to the universal ribosomal protein uL10 family. Part of the ribosomal stalk of the 50S ribosomal subunit. The N-terminus interacts with L11 and the large rRNA to form the base of the stalk. The C-terminus forms an elongated spine to which L12 dimers bind in a sequential fashion forming a multimeric L10(L12)X complex.

Its function is as follows. Forms part of the ribosomal stalk, playing a central role in the interaction of the ribosome with GTP-bound translation factors. The sequence is that of Large ribosomal subunit protein uL10 (rplJ) from Borreliella burgdorferi (strain ATCC 35210 / DSM 4680 / CIP 102532 / B31) (Borrelia burgdorferi).